The primary structure comprises 404 residues: Protein L-Myc-1b (404 aa).

2 disordered regions span residues 175–195 (KKQVSSGSESRTDSSDDEEID) and 238–331 (QQHN…FLER). Over residues 287–315 (VPAQSPTVSASPTHTSYHLKSQPSSPQSS) the composition is skewed to polar residues. In terms of domain architecture, bHLH spans 321-373 (DKRKTHNFLERKRRNDLRSRFLALRDEIPGLVDCPKTPKVVILTKATEYLRTL). Residues 373–401 (LHVSDRQKAQEKKQLKSKQQQLLRRLAEL) are leucine-zipper.

In terms of assembly, efficient DNA binding requires dimerization with another bHLH protein. Binds DNA as a heterodimer with max.

The protein resides in the nucleus. This is Protein L-Myc-1b from Danio rerio (Zebrafish).